Consider the following 503-residue polypeptide: Cytochrome c-552 (503 aa).

The first 16 residues, 1–16 (MKKNTIILVGALIAIA), serve as a signal peptide directing secretion. His102 is a heme c binding site. Residues Cys130, Cys133, and Lys134 each contribute to the heme site. Cys168, Cys171, His172, Cys210, Cys213, and His214 together coordinate heme c. Glu216, Tyr217, Lys273, and Gln275 together coordinate Ca(2+). Tyr217 provides a ligand contact to substrate. His276 contacts substrate. Positions 287, 294, 297, 298, 312, 325, 328, 329, and 404 each coordinate heme c.

This sequence belongs to the cytochrome c-552 family. Requires Ca(2+) as cofactor. Heme c serves as cofactor.

Its subcellular location is the periplasm. It catalyses the reaction 6 Fe(III)-[cytochrome c] + NH4(+) + 2 H2O = 6 Fe(II)-[cytochrome c] + nitrite + 8 H(+). It participates in nitrogen metabolism; nitrate reduction (assimilation). Functionally, catalyzes the reduction of nitrite to ammonia, consuming six electrons in the process. This chain is Cytochrome c-552, found in Maridesulfovibrio salexigens (strain ATCC 14822 / DSM 2638 / NCIMB 8403 / VKM B-1763) (Desulfovibrio salexigens).